Reading from the N-terminus, the 190-residue chain is Protein GrpE (190 aa).

Positions 1–10 are enriched in basic and acidic residues; that stretch reads MKKHVTEEQK. The interval 1-42 is disordered; that stretch reads MKKHVTEEQKTSAAPEAEQASPESSAAEAATPEERISRLEEQ. A compositionally biased stretch (low complexity) spans 12–30; that stretch reads SAAPEAEQASPESSAAEAA. A compositionally biased stretch (basic and acidic residues) spans 32 to 42; that stretch reads PEERISRLEEQ.

Belongs to the GrpE family. As to quaternary structure, homodimer.

It localises to the cytoplasm. In terms of biological role, participates actively in the response to hyperosmotic and heat shock by preventing the aggregation of stress-denatured proteins, in association with DnaK and GrpE. It is the nucleotide exchange factor for DnaK and may function as a thermosensor. Unfolded proteins bind initially to DnaJ; upon interaction with the DnaJ-bound protein, DnaK hydrolyzes its bound ATP, resulting in the formation of a stable complex. GrpE releases ADP from DnaK; ATP binding to DnaK triggers the release of the substrate protein, thus completing the reaction cycle. Several rounds of ATP-dependent interactions between DnaJ, DnaK and GrpE are required for fully efficient folding. This chain is Protein GrpE, found in Pelobacter propionicus (strain DSM 2379 / NBRC 103807 / OttBd1).